Consider the following 599-residue polypeptide: Pentatricopeptide repeat-containing protein At3g62470, mitochondrial (599 aa).

The N-terminal 99 residues, 1 to 99, are a transit peptide targeting the mitochondrion; sequence MAAAPWLHLS…RGFSSGSSNV (99 aa). PPR repeat units follow at residues 194-228, 230-262, 263-293, 297-331, 332-366, 367-401, 402-436, 437-471, 472-506, and 507-541; these read DSRTYNSMMSILAKTRQFETMVSVLEEMGTKGLLT, ETFTIAMKAFAAAKERKKAVGIFELMKKYKFKI, GVETINCLLDSLGRAKLGKEAQVLFDKLKER, NMMTYTVLLNGWCRVRNLIEAARIWNDMIDQGLKP, DIVAHNVMLEGLLRSRKKSDAIKLFHVMKSKGPCP, NVRSYTIMIRDFCKQSSMETAIEYFDDMVDSGLQP, DAAVYTCLITGFGTQKKLDTVYELLKEMQEKGHPP, DGKTYNALIKLMANQKMPEHATRIYNKMIQNEIEP, SIHTFNMIMKSYFMARNYEMGRAVWEEMIKKGICP, and DDNSYTVLIRGLIGEGKSREACRYLEEMLDKGMKT.

This sequence belongs to the PPR family. P subfamily.

The protein localises to the mitochondrion. In Arabidopsis thaliana (Mouse-ear cress), this protein is Pentatricopeptide repeat-containing protein At3g62470, mitochondrial.